The chain runs to 482 residues: Keratin, type I cytoskeletal 39 (482 aa).

Residues 1-24 are disordered; it reads MDTKGSTVTISSSTPPQNCSGNTN. The interval 1–91 is head; it reads MDTKGSTVTI…RCTEGINTHE (91 aa). Positions 91–402 constitute an IF rod domain; that stretch reads EKETMQILNE…SLLESLDGRL (312 aa). The tract at residues 92–126 is coil 1A; sequence KETMQILNERLANYLEKVRMLEGENADLEDKIQEA. Positions 127 to 137 are linker 1; sequence CSKALPILCPD. The tract at residues 138–238 is coil 1B; sequence YLSYYTTIEE…HEEEVNSLQC (101 aa). Residues 239–254 are linker 12; it reads QLGDRINIEVTAAPSV. A coil 2 region spans residues 255-398; it reads DLNQILQEMR…ATYRSLLESL (144 aa). Residues 399–482 are tail; sequence DGRLPCNPCA…PCYITRATKV (84 aa).

Belongs to the intermediate filament family. In terms of assembly, heterotetramer of two type I and two type II keratins.

May play a role in late hair differentiation. This Mus musculus (Mouse) protein is Keratin, type I cytoskeletal 39 (Krt39).